The primary structure comprises 461 residues: 3-oxoacyl-[acyl-carrier-protein] synthase, mitochondrial (461 aa).

The N-terminal 28 residues, 1–28, are a transit peptide targeting the mitochondrion; it reads MATSNLRRHLSASRLRLNRFISTSSSYH. The Ketosynthase family 3 (KS3) domain occupies 30–460; the sequence is HRRVVVTGLG…GTNASLLFAS (431 aa). Active-site for beta-ketoacyl synthase activity residues include Cys209, His350, and His389.

The protein belongs to the thiolase-like superfamily. Beta-ketoacyl-ACP synthases family. In terms of assembly, homodimer. In terms of tissue distribution, expressed at the same level in leaves, roots, siliques and flowers.

The protein resides in the mitochondrion. The enzyme catalyses a fatty acyl-[ACP] + malonyl-[ACP] + H(+) = a 3-oxoacyl-[ACP] + holo-[ACP] + CO2. It catalyses the reaction butanoyl-[ACP] + malonyl-[ACP] + H(+) = 3-oxohexanoyl-[ACP] + holo-[ACP] + CO2. The catalysed reaction is hexanoyl-[ACP] + malonyl-[ACP] + H(+) = 3-oxooctanoyl-[ACP] + holo-[ACP] + CO2. It carries out the reaction octanoyl-[ACP] + malonyl-[ACP] + H(+) = 3-oxodecanoyl-[ACP] + holo-[ACP] + CO2. The enzyme catalyses decanoyl-[ACP] + malonyl-[ACP] + H(+) = 3-oxododecanoyl-[ACP] + holo-[ACP] + CO2. It catalyses the reaction dodecanoyl-[ACP] + malonyl-[ACP] + H(+) = 3-oxotetradecanoyl-[ACP] + holo-[ACP] + CO2. The catalysed reaction is tetradecanoyl-[ACP] + malonyl-[ACP] + H(+) = 3-oxohexadecanoyl-[ACP] + holo-[ACP] + CO2. It carries out the reaction hexadecanoyl-[ACP] + malonyl-[ACP] + H(+) = 3-oxooctadecanoyl-[ACP] + holo-[ACP] + CO2. The protein operates within lipid metabolism; fatty acid biosynthesis. Its activity is regulated as follows. Inhibited by cerulenin. Functionally, catalyzes all the condensation reaction of fatty acid synthesis by the addition to an acyl acceptor of two carbons from malonyl-ACP. Able to elongate saturated acyl chains from 4 to at least 16 carbons. Uses malonyl-CoA but not acetyl-CoA as primer substrate. When expressed in a heterologous system, reveals a bimodal distribution of products, with peaks at C8 and C14-C16. The major product of the reaction (octanoyl-ACP) is required for the lipoylation of essential mitochondrial proteins. Required for mitochondrial fatty acid synthesis (mtFAS). MtFAS are essential for photorespiration and plant development, probably by influencing mitochondrial membrane lipid composition and other lipid metabolic pathways. The polypeptide is 3-oxoacyl-[acyl-carrier-protein] synthase, mitochondrial (Arabidopsis thaliana (Mouse-ear cress)).